We begin with the raw amino-acid sequence, 257 residues long: 4-hydroxy-tetrahydrodipicolinate reductase (257 aa).

NAD(+)-binding positions include 7-12, aspartate 32, 91-93, and 115-118; these read GAAGRM, GTT, and SPNF. The Proton donor/acceptor role is filled by histidine 147. Position 148 (histidine 148) interacts with (S)-2,3,4,5-tetrahydrodipicolinate. Lysine 151 functions as the Proton donor in the catalytic mechanism. (S)-2,3,4,5-tetrahydrodipicolinate is bound at residue 157 to 158; it reads GT.

Belongs to the DapB family.

The protein localises to the cytoplasm. It catalyses the reaction (S)-2,3,4,5-tetrahydrodipicolinate + NAD(+) + H2O = (2S,4S)-4-hydroxy-2,3,4,5-tetrahydrodipicolinate + NADH + H(+). It carries out the reaction (S)-2,3,4,5-tetrahydrodipicolinate + NADP(+) + H2O = (2S,4S)-4-hydroxy-2,3,4,5-tetrahydrodipicolinate + NADPH + H(+). Its pathway is amino-acid biosynthesis; L-lysine biosynthesis via DAP pathway; (S)-tetrahydrodipicolinate from L-aspartate: step 4/4. Catalyzes the conversion of 4-hydroxy-tetrahydrodipicolinate (HTPA) to tetrahydrodipicolinate. This chain is 4-hydroxy-tetrahydrodipicolinate reductase, found in Archaeoglobus fulgidus (strain ATCC 49558 / DSM 4304 / JCM 9628 / NBRC 100126 / VC-16).